Here is a 511-residue protein sequence, read N- to C-terminus: Xylose import ATP-binding protein XylG (511 aa).

ABC transporter domains follow at residues L6–E244 and F261–P506.

Belongs to the ABC transporter superfamily. Xylose importer (TC 3.A.1.2.4) family. The complex is composed of two ATP-binding proteins (XylG), two transmembrane proteins (XylH) and a solute-binding protein (XylF).

Its subcellular location is the cell inner membrane. It carries out the reaction D-xylose(out) + ATP + H2O = D-xylose(in) + ADP + phosphate + H(+). Functionally, part of the ABC transporter complex XylFGH involved in xylose import. Responsible for energy coupling to the transport system. In Brucella melitensis biotype 1 (strain ATCC 23456 / CCUG 17765 / NCTC 10094 / 16M), this protein is Xylose import ATP-binding protein XylG.